Consider the following 2614-residue polypeptide: Talin-B (2614 aa).

Residues 85–369 enclose the FERM domain; the sequence is RPLKVRLMDE…GYIEILMKKR (285 aa). Residues 393–421 are disordered; the sequence is RGQTSQATTSSSLSGYDGNGGREGQYSAP. The span at 395-406 shows a compositional bias: low complexity; the sequence is QTSQATTSSSLS. Coiled-coil stretches lie at residues 1938 to 1965 and 2033 to 2057; these read TQNI…ASGK and NKAI…LVQS. Residues 2219–2460 enclose the I/LWEQ domain; it reads LLFAAGESLE…SIRKKEYSDQ (242 aa). The tract at residues 2454–2557 is disordered; that stretch reads KKEYSDQTGN…AAPTAAAPNK (104 aa). Residues 2473–2487 show a composition bias toward polar residues; that stretch reads KPTTSISVGITPTKR. Residues 2517 to 2537 show a composition bias toward low complexity; sequence KKPAPSQAPSSPVAPVSAPVS. A compositionally biased stretch (pro residues) spans 2538 to 2548; it reads KPSPKPAPKPA. Residues 2553 to 2614 enclose the HP domain; it reads AAPNKTYTLE…NNIKTKLGLF (62 aa).

The protein resides in the cytoplasm. The protein localises to the cytoskeleton. It localises to the cell cortex. In terms of biological role, actin-binding protein required for multicellular morphogenesis. Substrate of pkgB and/or pkbA. This Dictyostelium discoideum (Social amoeba) protein is Talin-B (talB).